We begin with the raw amino-acid sequence, 432 residues long: Glutamyl-tRNA reductase (432 aa).

Residues 49-52 (TCNR), serine 109, 114-116 (EGQ), and glutamine 120 each bind substrate. The active-site Nucleophile is cysteine 50. 189–194 (GAGKMS) lines the NADP(+) pocket.

This sequence belongs to the glutamyl-tRNA reductase family. In terms of assembly, homodimer.

It catalyses the reaction (S)-4-amino-5-oxopentanoate + tRNA(Glu) + NADP(+) = L-glutamyl-tRNA(Glu) + NADPH + H(+). It functions in the pathway porphyrin-containing compound metabolism; protoporphyrin-IX biosynthesis; 5-aminolevulinate from L-glutamyl-tRNA(Glu): step 1/2. It participates in porphyrin-containing compound metabolism; chlorophyll biosynthesis. Its function is as follows. Catalyzes the NADPH-dependent reduction of glutamyl-tRNA(Glu) to glutamate 1-semialdehyde (GSA). This Cyanothece sp. (strain PCC 7425 / ATCC 29141) protein is Glutamyl-tRNA reductase.